The chain runs to 555 residues: Aerobic glycerol-3-phosphate dehydrogenase (555 aa).

Residue 24-52 (DLFIIGGGITGAGTALDAASRGMKVALSE) coordinates FAD.

The protein belongs to the FAD-dependent glycerol-3-phosphate dehydrogenase family. It depends on FAD as a cofactor.

It localises to the cytoplasm. The catalysed reaction is a quinone + sn-glycerol 3-phosphate = dihydroxyacetone phosphate + a quinol. The protein operates within polyol metabolism; glycerol degradation via glycerol kinase pathway; glycerone phosphate from sn-glycerol 3-phosphate (aerobic route): step 1/1. The chain is Aerobic glycerol-3-phosphate dehydrogenase (glpD) from Bacillus subtilis (strain 168).